The chain runs to 378 residues: Prolargin (378 aa).

An N-terminal signal peptide occupies residues 1–21; sequence MRASFFWLLPLLLILASVAQG. Positions 22 to 62 are disordered; it reads QPTRPKPGIRRKPKPRPTPRFPQAPEPAEPTDLPPPLPPGP. Basic residues predominate over residues 28-38; it reads PGIRRKPKPRP. Pro residues predominate over residues 39–62; the sequence is TPRFPQAPEPAEPTDLPPPLPPGP. 12 LRR repeats span residues 91–110, 111–134, 135–158, 159–179, 180–203, 204–229, 230–250, 251–274, 275–299, 300–319, 320–358, and 359–378; these read RRVPVIPPRIHYLYLQNNFI, TELPLESFQNATGLRWVNLDNNRI, RKVDQRVLGKLPSLAFLYMEKNQL, EEVPSALPRNLEQLRLSQNLI, SRIPPGVFSKLENLLLLDLQHNRL, SDGVFKADTFQGLKNLMQLNLAHNIL, RKMPPKVPQAIHQLYLDSNKI, ETIPNGYFKDFPNLAFIRMNYNKL, SDRGLPKNSFNISNLLVLHLSHNKI, SNVPAISNKLEHLYLNNNSI, EKINGTQICPNNLVAFHDFSSDLENVPHLRYLRLDGNFL, and KPPIPLDLMMCFRLLQSVVI. Asn-120 is a glycosylation site (N-linked (GlcNAc...) asparagine). N-linked (GlcNAc...) asparagine glycosylation is found at Asn-285, Asn-316, and Asn-323. Cys-328 and Cys-369 are oxidised to a cystine.

It belongs to the small leucine-rich proteoglycan (SLRP) family. SLRP class II subfamily. As to quaternary structure, binds the basement membrane heparan sulfate proteoglycan perlecan and triple helical collagens type I and type II. Glycosylated; contains heparan sulfate. Expressed in cartilage throughout both fetal development and postnatal life. It is also expressed in the developing embryo prior to skeletogenesis. In adult, highest expression in lung, lower levels in cardiac and skeletal muscle.

It localises to the secreted. Its subcellular location is the extracellular space. The protein localises to the extracellular matrix. Functionally, may anchor basement membranes to the underlying connective tissue. This chain is Prolargin (Prelp), found in Mus musculus (Mouse).